Here is a 189-residue protein sequence, read N- to C-terminus: MRELKILVVNNYGQFCHLIHRTVRDLDMDTKIIPNVTPIEEILAEEPDGLILSGGPEMERAGLCFDYVREIDVPILGICLGHQAIALAYGGHVHAGKKGGYAEIEVEVLEEDDILRGLGPKTTVWASHADEVAILPDGFIHLARSDVCEIEAMRHPTKPIYGVQWHPEVSHTKKGEELLMNFFEVCDLY.

The region spanning lysine 5–tyrosine 189 is the Glutamine amidotransferase type-1 domain. The active-site Nucleophile is cysteine 79. Catalysis depends on residues histidine 166 and glutamate 168.

Heterodimer composed of a glutamine amidotransferase subunit (A) and a GMP-binding subunit (B).

The enzyme catalyses XMP + L-glutamine + ATP + H2O = GMP + L-glutamate + AMP + diphosphate + 2 H(+). Its pathway is purine metabolism; GMP biosynthesis; GMP from XMP (L-Gln route): step 1/1. Its function is as follows. Catalyzes the synthesis of GMP from XMP. In Methanosarcina mazei (strain ATCC BAA-159 / DSM 3647 / Goe1 / Go1 / JCM 11833 / OCM 88) (Methanosarcina frisia), this protein is GMP synthase [glutamine-hydrolyzing] subunit A.